The sequence spans 440 residues: Syntrophin-1 (440 aa).

2 PH domains span residues 2–208 (AAVR…ACTT) and 227–340 (QVRH…IGGY). One can recognise a PDZ domain in the interval 45-128 (TVRVVKYDGN…VVDLQVQYRR (84 aa)). In terms of domain architecture, SU spans 384–440 (SFETIRATGDDGGRFLWVDFGPPHGEQELDLLNSAKPVVFILHSFLATKVYRLGLYA).

It belongs to the syntrophin family. As to quaternary structure, component of the dystrophin glycoprotein complex (DGC). Interacts with dyb-1, dys-1 and snf-6 to form the DGC. As to expression, expressed in neurons and muscles; particularly strong expression in the body wall, head and vulval muscles, and in ventral nerve cord (at protein level).

It is found in the membrane. It localises to the cytoplasm. The protein resides in the cytoskeleton. Its function is as follows. Adapter protein that binds to and probably organizes the subcellular localization of a variety of membrane proteins. May link various receptors to the actin cytoskeleton and the dystrophin glycoprotein complex (DGC). May also act by slowing calcium channel activity via a direct or indirect mechanism potentially involving other second messengers. Plays an early role in the formation of the neuromuscular junction and is necessary for muscle maintenance. The protein is Syntrophin-1 of Caenorhabditis elegans.